The sequence spans 350 residues: Glycolate oxidase subunit GlcE (350 aa).

Positions 1-173 (MLRECDYSQA…TEISMKVLPR (173 aa)) constitute an FAD-binding PCMH-type domain.

The glycolate oxidase likely consists of three subunits, GlcD, GlcE and GlcF. Requires FAD as cofactor.

The protein resides in the cell inner membrane. It catalyses the reaction glycolate + A = glyoxylate + AH2. It carries out the reaction (R)-lactate + A = pyruvate + AH2. In vitro the glycolate oxidase activity is inhibited by the sulfhydryl inhibitors CuSO4 and PCMB, by KCN, but not by the metal complexing agent EDTA. Its function is as follows. Component of a complex that catalyzes the oxidation of glycolate to glyoxylate. Is required for E.coli to grow on glycolate as a sole source of carbon. Is also able to oxidize D-lactate ((R)-lactate) with a similar rate. Does not link directly to O(2), and 2,6-dichloroindophenol (DCIP) and phenazine methosulfate (PMS) can act as artificial electron acceptors in vitro, but the physiological molecule that functions as a primary electron acceptor during glycolate oxidation is unknown. The polypeptide is Glycolate oxidase subunit GlcE (Escherichia coli (strain K12)).